Reading from the N-terminus, the 288-residue chain is NAD(P)H quinone oxidoreductase YCP4 (288 aa).

The region spanning 3–192 (IAIIQYSTYG…EIAEKQGEAF (190 aa)) is the Flavodoxin-like domain. FMN-binding positions include 9–13 (STYGH) and 110–164 (VFVS…SPYG). The interval 202 to 288 (GSKKTNTTTT…KSSCSKCIIM (87 aa)) is disordered. Low complexity predominate over residues 205-254 (KTNTTTTSKSAATSDAAGTTSGTAAGTSAATGAATGTSAPKESTKEASSS). A compositionally biased stretch (polar residues) spans 261-288 (NGTATRTQQSTKAPETAEKSSCSKCIIM).

This sequence belongs to the WrbA family. It depends on FMN as a cofactor.

It is found in the cell membrane. It carries out the reaction a quinone + NADH + H(+) = a quinol + NAD(+). The enzyme catalyses a quinone + NADPH + H(+) = a quinol + NADP(+). In terms of biological role, flavodoxin-like protein (FLP) that plays a role in cell wall integrity, oxidative stress protection and virulence. FLPs act as NAD(P)H quinone oxidoreductases. Reduces ubiquinone (coenzyme Q), enabling it to serve as an antioxidant in the membrane. This is NAD(P)H quinone oxidoreductase YCP4 from Candida albicans (strain SC5314 / ATCC MYA-2876) (Yeast).